Here is a 734-residue protein sequence, read N- to C-terminus: Photosystem I P700 chlorophyll a apoprotein A2 (734 aa).

The next 8 membrane-spanning stretches (helical) occupy residues 46–69 (IFAS…FHVA), 135–158 (LYTG…LHLQ), 175–199 (LNHH…HVAI), 273–291 (MAHH…GHMY), 330–353 (LHFQ…QHMY), 369–395 (AALY…IFFL), 417–439 (AIIS…LYVH), and 517–535 (FLVH…LILV). The [4Fe-4S] cluster site is built by Cys559 and Cys568. A run of 2 helical transmembrane segments spans residues 575–596 (AFYL…YWHW) and 643–665 (LSVW…MFLI). Residues His654, Met662, and Tyr670 each contribute to the chlorophyll a site. Phylloquinone is bound at residue Trp671. A helical membrane pass occupies residues 707-727 (LVGLAHFSVGYIFTYAAFLIA).

This sequence belongs to the PsaA/PsaB family. In terms of assembly, the PsaA/B heterodimer binds the P700 chlorophyll special pair and subsequent electron acceptors. PSI consists of a core antenna complex that captures photons, and an electron transfer chain that converts photonic excitation into a charge separation. The eukaryotic PSI reaction center is composed of at least 11 subunits. P700 is a chlorophyll a/chlorophyll a' dimer, A0 is one or more chlorophyll a, A1 is one or both phylloquinones and FX is a shared 4Fe-4S iron-sulfur center. is required as a cofactor.

The protein resides in the plastid. The protein localises to the chloroplast thylakoid membrane. It carries out the reaction reduced [plastocyanin] + hnu + oxidized [2Fe-2S]-[ferredoxin] = oxidized [plastocyanin] + reduced [2Fe-2S]-[ferredoxin]. Functionally, psaA and PsaB bind P700, the primary electron donor of photosystem I (PSI), as well as the electron acceptors A0, A1 and FX. PSI is a plastocyanin-ferredoxin oxidoreductase, converting photonic excitation into a charge separation, which transfers an electron from the donor P700 chlorophyll pair to the spectroscopically characterized acceptors A0, A1, FX, FA and FB in turn. Oxidized P700 is reduced on the lumenal side of the thylakoid membrane by plastocyanin. The sequence is that of Photosystem I P700 chlorophyll a apoprotein A2 from Adiantum capillus-veneris (Maidenhair fern).